The following is a 257-amino-acid chain: Cytosolic Fe-S cluster assembly factor NUBP2 homolog (257 aa).

14-21 lines the ATP pocket; sequence GKGGVGKS. [4Fe-4S] cluster contacts are provided by cysteine 188 and cysteine 191.

The protein belongs to the Mrp/NBP35 ATP-binding proteins family. NUBP2/CFD1 subfamily. In terms of assembly, heterotetramer of 2 NUBP1 and 2 NUBP2 chains. It depends on [4Fe-4S] cluster as a cofactor.

It is found in the cytoplasm. Functionally, component of the cytosolic iron-sulfur (Fe/S) protein assembly (CIA) machinery. Required for maturation of extramitochondrial Fe-S proteins. The NUBP1-NUBP2 heterotetramer forms a Fe-S scaffold complex, mediating the de novo assembly of an Fe-S cluster and its transfer to target apoproteins. In Culex quinquefasciatus (Southern house mosquito), this protein is Cytosolic Fe-S cluster assembly factor NUBP2 homolog.